The primary structure comprises 427 residues: UDP-N-acetylglucosamine 1-carboxyvinyltransferase (427 aa).

A phosphoenolpyruvate-binding site is contributed by 22–23 (KN). Arginine 99 provides a ligand contact to UDP-N-acetyl-alpha-D-glucosamine. Cysteine 123 (proton donor) is an active-site residue. At cysteine 123 the chain carries 2-(S-cysteinyl)pyruvic acid O-phosphothioketal. UDP-N-acetyl-alpha-D-glucosamine contacts are provided by residues 128 to 132 (RPIDL), aspartate 313, and isoleucine 335.

This sequence belongs to the EPSP synthase family. MurA subfamily.

Its subcellular location is the cytoplasm. It catalyses the reaction phosphoenolpyruvate + UDP-N-acetyl-alpha-D-glucosamine = UDP-N-acetyl-3-O-(1-carboxyvinyl)-alpha-D-glucosamine + phosphate. The protein operates within cell wall biogenesis; peptidoglycan biosynthesis. Functionally, cell wall formation. Adds enolpyruvyl to UDP-N-acetylglucosamine. The protein is UDP-N-acetylglucosamine 1-carboxyvinyltransferase of Novosphingobium aromaticivorans (strain ATCC 700278 / DSM 12444 / CCUG 56034 / CIP 105152 / NBRC 16084 / F199).